The chain runs to 177 residues: Small ribosomal subunit protein bS21m (177 aa).

Residues 1 to 17 (MLKSTLRLSRISLRRGF) constitute a mitochondrion transit peptide.

This sequence belongs to the bacterial ribosomal protein bS21 family. As to quaternary structure, component of the mitochondrial small ribosomal subunit (mt-SSU). Mature yeast 74S mitochondrial ribosomes consist of a small (37S) and a large (54S) subunit. The 37S small subunit contains a 15S ribosomal RNA (15S mt-rRNA) and 34 different proteins. The 54S large subunit contains a 21S rRNA (21S mt-rRNA) and 46 different proteins.

The protein resides in the mitochondrion. Its function is as follows. Component of the mitochondrial ribosome (mitoribosome), a dedicated translation machinery responsible for the synthesis of mitochondrial genome-encoded proteins, including at least some of the essential transmembrane subunits of the mitochondrial respiratory chain. The mitoribosomes are attached to the mitochondrial inner membrane and translation products are cotranslationally integrated into the membrane. The protein is Small ribosomal subunit protein bS21m (MRP21) of Saccharomyces cerevisiae (strain ATCC 204508 / S288c) (Baker's yeast).